The sequence spans 244 residues: Phosphonates import ATP-binding protein PhnC (244 aa).

One can recognise an ABC transporter domain in the interval 6 to 244 (IECHNLETAY…LQAQFVVNSQ (239 aa)). 41 to 48 (GLNGAGKS) provides a ligand contact to ATP.

This sequence belongs to the ABC transporter superfamily. Phosphonates importer (TC 3.A.1.9.1) family. As to quaternary structure, the complex is composed of two ATP-binding proteins (PhnC), two transmembrane proteins (PhnE) and a solute-binding protein (PhnD).

Its subcellular location is the cell inner membrane. The enzyme catalyses phosphonate(out) + ATP + H2O = phosphonate(in) + ADP + phosphate + H(+). Part of the ABC transporter complex PhnCDE involved in phosphonates import. Responsible for energy coupling to the transport system. This Trichormus variabilis (strain ATCC 29413 / PCC 7937) (Anabaena variabilis) protein is Phosphonates import ATP-binding protein PhnC.